The chain runs to 98 residues: Citrate lyase acyl carrier protein (98 aa).

Ser14 bears the O-(phosphoribosyl dephospho-coenzyme A)serine mark.

The protein belongs to the CitD family. As to quaternary structure, oligomer with a subunit composition of (alpha,beta,gamma)6.

It is found in the cytoplasm. Functionally, covalent carrier of the coenzyme of citrate lyase. The protein is Citrate lyase acyl carrier protein of Shigella boydii serotype 4 (strain Sb227).